Consider the following 464-residue polypeptide: 3-isopropylmalate dehydratase large subunit (464 aa).

C337, C397, and C400 together coordinate [4Fe-4S] cluster.

This sequence belongs to the aconitase/IPM isomerase family. LeuC type 1 subfamily. Heterodimer of LeuC and LeuD. It depends on [4Fe-4S] cluster as a cofactor.

It carries out the reaction (2R,3S)-3-isopropylmalate = (2S)-2-isopropylmalate. It functions in the pathway amino-acid biosynthesis; L-leucine biosynthesis; L-leucine from 3-methyl-2-oxobutanoate: step 2/4. Catalyzes the isomerization between 2-isopropylmalate and 3-isopropylmalate, via the formation of 2-isopropylmaleate. The chain is 3-isopropylmalate dehydratase large subunit from Bacillus cereus (strain B4264).